A 264-amino-acid chain; its full sequence is Thymidylate synthase (264 aa).

A dUMP-binding site is contributed by arginine 21. Residue histidine 51 participates in (6R)-5,10-methylene-5,6,7,8-tetrahydrofolate binding. Position 126–127 (126–127) interacts with dUMP; it reads RR. Cysteine 146 serves as the catalytic Nucleophile. DUMP contacts are provided by residues 166–169, asparagine 177, and 207–209; these read RSAD and HIY. Aspartate 169 contributes to the (6R)-5,10-methylene-5,6,7,8-tetrahydrofolate binding site. Alanine 263 provides a ligand contact to (6R)-5,10-methylene-5,6,7,8-tetrahydrofolate.

This sequence belongs to the thymidylate synthase family. Bacterial-type ThyA subfamily. As to quaternary structure, homodimer.

It localises to the cytoplasm. It catalyses the reaction dUMP + (6R)-5,10-methylene-5,6,7,8-tetrahydrofolate = 7,8-dihydrofolate + dTMP. It functions in the pathway pyrimidine metabolism; dTTP biosynthesis. Catalyzes the reductive methylation of 2'-deoxyuridine-5'-monophosphate (dUMP) to 2'-deoxythymidine-5'-monophosphate (dTMP) while utilizing 5,10-methylenetetrahydrofolate (mTHF) as the methyl donor and reductant in the reaction, yielding dihydrofolate (DHF) as a by-product. This enzymatic reaction provides an intracellular de novo source of dTMP, an essential precursor for DNA biosynthesis. This Cupriavidus metallidurans (strain ATCC 43123 / DSM 2839 / NBRC 102507 / CH34) (Ralstonia metallidurans) protein is Thymidylate synthase.